The primary structure comprises 119 residues: Tubulin-specific chaperone A (119 aa).

Belongs to the TBCA family. As to quaternary structure, supercomplex made of cofactors A to E. Cofactors A and D function by capturing and stabilizing tubulin in a quasi-native conformation. Cofactor E binds to the cofactor D-tubulin complex; interaction with cofactor C then causes the release of tubulin polypeptides that are committed to the native state.

Its subcellular location is the cytoplasm. The protein resides in the cytoskeleton. In terms of biological role, required for the maintenance of microtubule structures and cell polarity. Beta-tubulin-folding protein; may have a regulatory role in the tubulin-folding pathway. In Schizosaccharomyces pombe (strain 972 / ATCC 24843) (Fission yeast), this protein is Tubulin-specific chaperone A (alp31).